A 104-amino-acid polypeptide reads, in one-letter code: Pterin-4-alpha-carbinolamine dehydratase (104 aa).

At A2 the chain carries N-acetylalanine. Residues 61–63 and 78–81 contribute to the substrate site; these read DHH and STHE.

Belongs to the pterin-4-alpha-carbinolamine dehydratase family. Homotetramer and homodimer. As to expression, the major tissues expressing cDcoH are hypothalamus, kidney and liver.

It localises to the cytoplasm. It is found in the nucleus. The catalysed reaction is (4aS,6R)-4a-hydroxy-L-erythro-5,6,7,8-tetrahydrobiopterin = (6R)-L-erythro-6,7-dihydrobiopterin + H2O. Involved in tetrahydrobiopterin biosynthesis. Seems to both prevent the formation of 7-pterins and accelerate the formation of quinonoid-BH2. Coactivator for HNF1A-dependent transcription. Regulates the dimerization of homeodomain protein HNF1A and enhances its transcriptional activity. Also acts as a coactivator for HNF1B-dependent transcription. The protein is Pterin-4-alpha-carbinolamine dehydratase (PCBD1) of Gallus gallus (Chicken).